The chain runs to 321 residues: Lipoyl synthase (321 aa).

Cys68, Cys73, Cys79, Cys94, Cys98, Cys101, and Ser308 together coordinate [4Fe-4S] cluster. The Radical SAM core domain maps to Phe80–Thr297.

It belongs to the radical SAM superfamily. Lipoyl synthase family. [4Fe-4S] cluster is required as a cofactor.

The protein resides in the cytoplasm. It catalyses the reaction [[Fe-S] cluster scaffold protein carrying a second [4Fe-4S](2+) cluster] + N(6)-octanoyl-L-lysyl-[protein] + 2 oxidized [2Fe-2S]-[ferredoxin] + 2 S-adenosyl-L-methionine + 4 H(+) = [[Fe-S] cluster scaffold protein] + N(6)-[(R)-dihydrolipoyl]-L-lysyl-[protein] + 4 Fe(3+) + 2 hydrogen sulfide + 2 5'-deoxyadenosine + 2 L-methionine + 2 reduced [2Fe-2S]-[ferredoxin]. The protein operates within protein modification; protein lipoylation via endogenous pathway; protein N(6)-(lipoyl)lysine from octanoyl-[acyl-carrier-protein]: step 2/2. Functionally, catalyzes the radical-mediated insertion of two sulfur atoms into the C-6 and C-8 positions of the octanoyl moiety bound to the lipoyl domains of lipoate-dependent enzymes, thereby converting the octanoylated domains into lipoylated derivatives. This Vibrio vulnificus (strain CMCP6) protein is Lipoyl synthase.